A 67-amino-acid polypeptide reads, in one-letter code: Large ribosomal subunit protein bL35 (67 aa).

It belongs to the bacterial ribosomal protein bL35 family.

In Sinorhizobium medicae (strain WSM419) (Ensifer medicae), this protein is Large ribosomal subunit protein bL35.